A 401-amino-acid polypeptide reads, in one-letter code: Argininosuccinate synthase (401 aa).

10-18 (AYSGGVDTS) contacts ATP. Residue Tyr-89 participates in L-citrulline binding. ATP is bound at residue Gly-119. L-aspartate is bound by residues Thr-121, Asn-125, and Asp-126. Asn-125 contributes to the L-citrulline binding site. 5 residues coordinate L-citrulline: Arg-129, Ser-177, Ser-186, Glu-262, and Tyr-274.

This sequence belongs to the argininosuccinate synthase family. Type 1 subfamily. In terms of assembly, homotetramer.

The protein localises to the cytoplasm. The catalysed reaction is L-citrulline + L-aspartate + ATP = 2-(N(omega)-L-arginino)succinate + AMP + diphosphate + H(+). The protein operates within amino-acid biosynthesis; L-arginine biosynthesis; L-arginine from L-ornithine and carbamoyl phosphate: step 2/3. The chain is Argininosuccinate synthase from Thermosynechococcus vestitus (strain NIES-2133 / IAM M-273 / BP-1).